A 312-amino-acid polypeptide reads, in one-letter code: Aspartate carbamoyltransferase catalytic subunit (312 aa).

Carbamoyl phosphate contacts are provided by R54 and T55. K83 serves as a coordination point for L-aspartate. 3 residues coordinate carbamoyl phosphate: R104, H132, and Q135. Positions 165 and 226 each coordinate L-aspartate. Residues L263 and P264 each contribute to the carbamoyl phosphate site.

The protein belongs to the aspartate/ornithine carbamoyltransferase superfamily. ATCase family. Heterooligomer of catalytic and regulatory chains.

The enzyme catalyses carbamoyl phosphate + L-aspartate = N-carbamoyl-L-aspartate + phosphate + H(+). It participates in pyrimidine metabolism; UMP biosynthesis via de novo pathway; (S)-dihydroorotate from bicarbonate: step 2/3. Functionally, catalyzes the condensation of carbamoyl phosphate and aspartate to form carbamoyl aspartate and inorganic phosphate, the committed step in the de novo pyrimidine nucleotide biosynthesis pathway. The chain is Aspartate carbamoyltransferase catalytic subunit from Methanothermobacter thermautotrophicus (strain ATCC 29096 / DSM 1053 / JCM 10044 / NBRC 100330 / Delta H) (Methanobacterium thermoautotrophicum).